We begin with the raw amino-acid sequence, 53 residues long: UPF0391 membrane protein azo1750 (53 aa).

Helical transmembrane passes span 6-26 (VIFL…IAAG) and 30-50 (IAKI…VLGM).

Belongs to the UPF0391 family.

The protein localises to the cell membrane. The protein is UPF0391 membrane protein azo1750 of Azoarcus sp. (strain BH72).